The primary structure comprises 391 residues: NADH-quinone oxidoreductase subunit D (391 aa).

The protein belongs to the complex I 49 kDa subunit family. As to quaternary structure, NDH-1 is composed of 14 different subunits. Subunits NuoB, C, D, E, F, and G constitute the peripheral sector of the complex.

The protein localises to the cell inner membrane. The enzyme catalyses a quinone + NADH + 5 H(+)(in) = a quinol + NAD(+) + 4 H(+)(out). Functionally, NDH-1 shuttles electrons from NADH, via FMN and iron-sulfur (Fe-S) centers, to quinones in the respiratory chain. The immediate electron acceptor for the enzyme in this species is believed to be ubiquinone. Couples the redox reaction to proton translocation (for every two electrons transferred, four hydrogen ions are translocated across the cytoplasmic membrane), and thus conserves the redox energy in a proton gradient. This chain is NADH-quinone oxidoreductase subunit D, found in Rickettsia rickettsii (strain Sheila Smith).